The primary structure comprises 358 residues: tRNA N6-adenosine threonylcarbamoyltransferase (358 aa).

Fe cation contacts are provided by histidine 118 and histidine 122. Residues 143-147, aspartate 176, glycine 189, and asparagine 298 contribute to the substrate site; that span reads IVSGG. Aspartate 326 provides a ligand contact to Fe cation.

The protein belongs to the KAE1 / TsaD family. Requires Fe(2+) as cofactor.

The protein localises to the cytoplasm. The catalysed reaction is L-threonylcarbamoyladenylate + adenosine(37) in tRNA = N(6)-L-threonylcarbamoyladenosine(37) in tRNA + AMP + H(+). Its function is as follows. Required for the formation of a threonylcarbamoyl group on adenosine at position 37 (t(6)A37) in tRNAs that read codons beginning with adenine. Is involved in the transfer of the threonylcarbamoyl moiety of threonylcarbamoyl-AMP (TC-AMP) to the N6 group of A37, together with TsaE and TsaB. TsaD likely plays a direct catalytic role in this reaction. This chain is tRNA N6-adenosine threonylcarbamoyltransferase, found in Rhodopirellula baltica (strain DSM 10527 / NCIMB 13988 / SH1).